The chain runs to 320 residues: Putative protein FRMPD2-like (320 aa).

PDZ domains follow at residues 1 to 46 (MTSI…ERRV) and 90 to 178 (EVKL…CRPP). The segment at 215 to 239 (DQEDSWRDSASPDAGEGLGLRPESS) is disordered.

This is Putative protein FRMPD2-like from Homo sapiens (Human).